The chain runs to 272 residues: Ribonuclease 3 (272 aa).

The disordered stretch occupies residues 1-22 (MSLQFLRSEASDGAGETSDASS). Positions 31-162 (TATHLARLTG…LVGAIYLDQG (132 aa)) constitute an RNase III domain. A Mg(2+)-binding site is contributed by glutamate 75. Aspartate 79 is an active-site residue. Residues aspartate 148 and glutamate 151 each coordinate Mg(2+). Residue glutamate 151 is part of the active site. In terms of domain architecture, DRBM spans 189 to 258 (NYKSRLIEYT…AKEAMKRLES (70 aa)).

This sequence belongs to the ribonuclease III family. As to quaternary structure, homodimer. Requires Mg(2+) as cofactor.

The protein resides in the cytoplasm. The enzyme catalyses Endonucleolytic cleavage to 5'-phosphomonoester.. Its function is as follows. Digests double-stranded RNA. Involved in the processing of primary rRNA transcript to yield the immediate precursors to the large and small rRNAs (23S and 16S). Processes some mRNAs, and tRNAs when they are encoded in the rRNA operon. Processes pre-crRNA and tracrRNA of type II CRISPR loci if present in the organism. This is Ribonuclease 3 from Chlorobaculum tepidum (strain ATCC 49652 / DSM 12025 / NBRC 103806 / TLS) (Chlorobium tepidum).